The following is a 76-amino-acid chain: Defensin-like protein 164 (76 aa).

An N-terminal signal peptide occupies residues methionine 1–alanine 25. Disulfide bonds link cysteine 31/cysteine 76, cysteine 41/cysteine 61, cysteine 46/cysteine 70, and cysteine 50/cysteine 72.

This sequence belongs to the DEFL family.

The protein localises to the secreted. In Arabidopsis thaliana (Mouse-ear cress), this protein is Defensin-like protein 164 (LCR38).